The chain runs to 286 residues: Shikimate dehydrogenase (NADP(+)) (286 aa).

Shikimate contacts are provided by residues 19–21 and T66; that span reads SFS. The Proton acceptor role is filled by K70. N91 and D107 together coordinate shikimate. NADP(+)-binding positions include 129-133 and L229; that span reads GSGGA. Shikimate is bound at residue Y231. G252 provides a ligand contact to NADP(+).

This sequence belongs to the shikimate dehydrogenase family. As to quaternary structure, homodimer.

The catalysed reaction is shikimate + NADP(+) = 3-dehydroshikimate + NADPH + H(+). Its pathway is metabolic intermediate biosynthesis; chorismate biosynthesis; chorismate from D-erythrose 4-phosphate and phosphoenolpyruvate: step 4/7. In terms of biological role, involved in the biosynthesis of the chorismate, which leads to the biosynthesis of aromatic amino acids. Catalyzes the reversible NADPH linked reduction of 3-dehydroshikimate (DHSA) to yield shikimate (SA). The polypeptide is Shikimate dehydrogenase (NADP(+)) (Prochlorococcus marinus (strain MIT 9301)).